The sequence spans 229 residues: PKHD-type hydroxylase OCAR_6723/OCA5_c13470 (229 aa).

Residues 78–180 (HIFPPLFNRY…RVASFFWLQS (103 aa)) enclose the Fe2OG dioxygenase domain. Positions 98, 100, and 161 each coordinate Fe cation. Arg-171 contacts 2-oxoglutarate.

Requires Fe(2+) as cofactor. L-ascorbate is required as a cofactor.

The chain is PKHD-type hydroxylase OCAR_6723/OCA5_c13470 from Afipia carboxidovorans (strain ATCC 49405 / DSM 1227 / KCTC 32145 / OM5) (Oligotropha carboxidovorans).